The primary structure comprises 115 residues: uncharacterized protein (115 aa).

This is an uncharacterized protein from Treponema pallidum (strain Nichols).